The following is a 1187-amino-acid chain: Myelin transcription factor 1-like protein (1187 aa).

Residues 1–22 (MDVDSEEKRHRTRSKGVRVPVE) are disordered. The CCHHC-type 1 zinc finger occupies 22–65 (EPAIQELFSCPTPGCDGSGHVSGKYARHRSVYGCPLAKKRKTQD). 4 residues coordinate Zn(2+): Cys-31, Cys-36, His-49, and Cys-55. Disordered regions lie at residues 56–178 (PLAK…QMSC) and 221–248 (RTES…GRKS). The span at 89 to 172 (ECYESDGTED…EEEEEEEENE (84 aa)) shows a compositional bias: acidic residues. Ser-251 is modified (phosphoserine). 2 disordered regions span residues 343–422 (SETN…DRSE) and 450–514 (REKM…GCDG). A compositionally biased stretch (polar residues) spans 344–358 (ETNPQDRSQPPNMSV). 4 stretches are compositionally biased toward basic and acidic residues: residues 362–377 (VRQE…DRSY), 401–412 (AKEDGCHERDDD), 450–488 (REKM…DSHV), and 496–506 (DPSRTEKRESK). CCHHC-type zinc fingers lie at residues 498 to 541 (SRTE…PPEI) and 542 to 585 (LAMH…KLAK). The Zn(2+) site is built by Cys-507, Cys-512, His-525, Cys-531, Cys-551, Cys-556, His-569, and Cys-575. Residues 686 to 710 (ASPSSSTTSSYAPSSSSNLSCGGGS) form a disordered region. 3 CCHHC-type zinc fingers span residues 897–940 (LATS…GIRI), 946–989 (DKED…QKDG), and 999–1042 (KSVK…MKKA). Positions 906, 911, 924, 930, 955, 960, 973, 979, 1008, 1013, 1026, and 1032 each coordinate Zn(2+). Residues 1058 to 1132 (NGIENDEEIK…ANLSQSLIHS (75 aa)) are a coiled coil.

The protein belongs to the MYT1 family. As to quaternary structure, interacts with SIN3B. In terms of tissue distribution, brain.

Its subcellular location is the nucleus. The protein resides in the chromosome. Functionally, transcription factor that plays a key role in neuronal differentiation by specifically repressing expression of non-neuronal genes during neuron differentiation. In contrast to other transcription repressors that inhibit specific lineages, mediates repression of multiple differentiation programs. Also represses expression of negative regulators of neurogenesis, such as members of the Notch signaling pathway, including HES1. The combination of three transcription factors, ASCL1, POU3F2/BRN2 and MYT1L, is sufficient to reprogram fibroblasts and other somatic cells into induced neuronal (iN) cells in vitro. Directly binds the 5'-AAGTT-3' core motif present on the promoter of target genes and represses transcription by recruiting a multiprotein complex containing SIN3B. The 5'-AAGTT-3' core motif is absent from the promoter of neural genes. The protein is Myelin transcription factor 1-like protein of Mus musculus (Mouse).